We begin with the raw amino-acid sequence, 601 residues long: Proline--tRNA ligase (601 aa).

It belongs to the class-II aminoacyl-tRNA synthetase family. ProS type 1 subfamily. In terms of assembly, homodimer.

The protein resides in the cytoplasm. It carries out the reaction tRNA(Pro) + L-proline + ATP = L-prolyl-tRNA(Pro) + AMP + diphosphate. Catalyzes the attachment of proline to tRNA(Pro) in a two-step reaction: proline is first activated by ATP to form Pro-AMP and then transferred to the acceptor end of tRNA(Pro). As ProRS can inadvertently accommodate and process non-cognate amino acids such as alanine and cysteine, to avoid such errors it has two additional distinct editing activities against alanine. One activity is designated as 'pretransfer' editing and involves the tRNA(Pro)-independent hydrolysis of activated Ala-AMP. The other activity is designated 'posttransfer' editing and involves deacylation of mischarged Ala-tRNA(Pro). The misacylated Cys-tRNA(Pro) is not edited by ProRS. The polypeptide is Proline--tRNA ligase (Tropheryma whipplei (strain TW08/27) (Whipple's bacillus)).